The following is a 116-amino-acid chain: Ribonuclease P protein component (116 aa).

This sequence belongs to the RnpA family. Consists of a catalytic RNA component (M1 or rnpB) and a protein subunit.

It catalyses the reaction Endonucleolytic cleavage of RNA, removing 5'-extranucleotides from tRNA precursor.. Its function is as follows. RNaseP catalyzes the removal of the 5'-leader sequence from pre-tRNA to produce the mature 5'-terminus. It can also cleave other RNA substrates such as 4.5S RNA. The protein component plays an auxiliary but essential role in vivo by binding to the 5'-leader sequence and broadening the substrate specificity of the ribozyme. This chain is Ribonuclease P protein component, found in Caldanaerobacter subterraneus subsp. tengcongensis (strain DSM 15242 / JCM 11007 / NBRC 100824 / MB4) (Thermoanaerobacter tengcongensis).